A 126-amino-acid chain; its full sequence is Fatty acid-binding protein, liver (126 aa).

Ala2 carries the post-translational modification N-acetylalanine.

The protein belongs to the calycin superfamily. Fatty-acid binding protein (FABP) family.

It is found in the cytoplasm. Functionally, binds free fatty acids and their coenzyme A derivatives, bilirubin, and some other small molecules in the cytoplasm. May be involved in intracellular lipid transport. This chain is Fatty acid-binding protein, liver (fabp1), found in Schroederichthys bivius (Narrowmouthed catshark).